The primary structure comprises 300 residues: MKQITIASRESKLALWQTNFVKNRIQSELNIPCEISTMKTQGDIILDQPLNKIGGKALFMKELEVAILSNKADIAVHSLKDVPYQLPQGFCLAGFMPREDPRDAFVSNKYNSIDDLPKGAVVGTSSLRRKAQLLHYRDDLEIRDLRGNIQTRLSKLDNGDYDAIILASAGLIRLELVERITQFIPVEISLPAVGQGIVVIEALERDNDLLEKIQKLNCRESSRVATAERAFNQELKGGCHVAIGAYAELDNNQITLMAMVASSDGKKILKRKMIGDDPTKLGKLLAQEMIALGAYKILES.

At Cys239 the chain carries S-(dipyrrolylmethanemethyl)cysteine.

The protein belongs to the HMBS family. In terms of assembly, monomer. The cofactor is dipyrromethane.

It carries out the reaction 4 porphobilinogen + H2O = hydroxymethylbilane + 4 NH4(+). The protein operates within porphyrin-containing compound metabolism; protoporphyrin-IX biosynthesis; coproporphyrinogen-III from 5-aminolevulinate: step 2/4. In terms of biological role, tetrapolymerization of the monopyrrole PBG into the hydroxymethylbilane pre-uroporphyrinogen in several discrete steps. The protein is Porphobilinogen deaminase of Francisella tularensis subsp. holarctica (strain OSU18).